The sequence spans 175 residues: MSRVAKKPVSLPKGVELNVQSELVSVKGPKGTLTLPKPTGVEIAIDGDVATLSANDPSQIAITGTVRAILANMVKGVSEGFERKLELVGVGYRAAMQGKDLSLALGFSHPLVFVAPEGITLSTPTQTEILVQGADKQRVGEVAAKIRGFRPPEPYKGKGVKYAGEVIIRKEAKKA.

The protein belongs to the universal ribosomal protein uL6 family. Part of the 50S ribosomal subunit.

Functionally, this protein binds to the 23S rRNA, and is important in its secondary structure. It is located near the subunit interface in the base of the L7/L12 stalk, and near the tRNA binding site of the peptidyltransferase center. This chain is Large ribosomal subunit protein uL6, found in Xanthomonas oryzae pv. oryzae (strain MAFF 311018).